A 460-amino-acid chain; its full sequence is Ammonium transporter 1 member 3 (460 aa).

The next 10 membrane-spanning stretches (helical) occupy residues 15–37, 50–72, 98–117, 124–146, 166–188, 209–227, 255–277, 305–327, 337–356, and 377–399; these read AIYLLFSAYLVFVMQLGFAMLCA, LTNVVDAVVGSLSYYLFGFAFAF, FFLYQWAFAIAVAGITSGSI, TAYLVFSFFLTGFVYPVVAHWLW, IDFAGSGVVHLVGGIAGFWGSIV, NATLVVLGTLLLWFGWFGF, AVTTTLAGSTAGIVTLFGRRLLV, PWAAILCGFCAAWVLIGLNILAL, AAQLHGGCGAWGLIFTGLFA, and GLILGGGWGLFGAQIVELLSIVV.

The protein belongs to the ammonia transporter channel (TC 1.A.11.2) family. In terms of tissue distribution, leaves.

Its subcellular location is the membrane. Functionally, ammonium transporter that may be involved in ammonium transport throughout the plant. This chain is Ammonium transporter 1 member 3 (AMT1-3), found in Solanum lycopersicum (Tomato).